The chain runs to 273 residues: 2,3,4,5-tetrahydropyridine-2,6-dicarboxylate N-succinyltransferase (273 aa).

Arginine 104 and aspartate 141 together coordinate substrate.

This sequence belongs to the transferase hexapeptide repeat family. As to quaternary structure, homotrimer.

It localises to the cytoplasm. It carries out the reaction (S)-2,3,4,5-tetrahydrodipicolinate + succinyl-CoA + H2O = (S)-2-succinylamino-6-oxoheptanedioate + CoA. It functions in the pathway amino-acid biosynthesis; L-lysine biosynthesis via DAP pathway; LL-2,6-diaminopimelate from (S)-tetrahydrodipicolinate (succinylase route): step 1/3. The sequence is that of 2,3,4,5-tetrahydropyridine-2,6-dicarboxylate N-succinyltransferase from Psychrobacter sp. (strain PRwf-1).